A 485-amino-acid chain; its full sequence is FAD-dependent monooxygenase elcH (485 aa).

Residues 1-19 (MFTLRSLAILAVFAATALA) form the signal peptide. Aspartate 59 and glycine 73 together coordinate FAD. Asparagine 126, asparagine 147, and asparagine 157 each carry an N-linked (GlcNAc...) asparagine glycan.

It belongs to the paxM FAD-dependent monooxygenase family. FAD is required as a cofactor.

It functions in the pathway secondary metabolite biosynthesis. Its function is as follows. FAD-dependent monooxygenase; part of the gene cluster that mediates the biosynthesis of elsinochrome C, a perelyenequinone phytotoxin structurally similar to cercosporin. The first step of elsinochrome C biosynthesis is performed by the polyketide synthase elcA which catalyzes the formation of nor-toralactone. The starter unit acyltransferase (SAT) domain of elcA initiates polyketide extension by the selective utilization of acetyl-CoA, which is elongated to the heptaketide in the beta-ketoacyl synthase (KS) domain by successive condensations with six malonyl units introduced by the malonyl acyltransferase (MAT) domain. The product template (PT) domain catalyzes C4-C9 and C2-C11 aldol cyclizations and dehydrations to a trihydroxynaphthalene, which is thought to be delivered to the thioesterase (TE) domain for product release. The bifunctional enzyme elcB then methylates nor-toralactone to toralactone before conducting an unusual oxidative aromatic ring opening. The next step in perylenequinone biosynthesis is an O-methylation at the nascent OH-6 of the elcB product performed by the O-methyltransferase elcD. The oxidative coupling of the two monomeric naphthol units in perylenequinone biosynthesis is catalyzed by the FAD-dependent monooxygenase elcE and the multicopper oxidase elcG. ElcG might catalyze the first intermolecular coupling in a regio- and stereo-selective manner via a phenol radical coupling mechanism and the elcE could forge the second C-C bond intramolecularly via a hydride transfer mechanism. The fasciclin domain-containing protein elcF might also play a role duting this step. The last piece of the puzzle in the biosynthesis of elsinochrome C is the additional annulation by enolate coupling to afford the dihydrobenzo(ghi)perylenequinone system, catalyzed by the FAD-dependent monooxygenase elcH. The protein is FAD-dependent monooxygenase elcH of Phaeosphaeria nodorum (strain SN15 / ATCC MYA-4574 / FGSC 10173) (Glume blotch fungus).